The sequence spans 467 residues: Glutamate--tRNA ligase (467 aa).

Residues 12–22 carry the 'HIGH' region motif; sequence PSPTGYLHIGG. The segment covering 114-128 has biased composition (basic and acidic residues); that stretch reads EQEAKKEKPRYDGRW. Residues 114-140 form a disordered region; sequence EQEAKKEKPRYDGRWRPAPGKTLPTPP. Positions 244-248 match the 'KMSKS' region motif; the sequence is KLSKR. Position 247 (lysine 247) interacts with ATP.

This sequence belongs to the class-I aminoacyl-tRNA synthetase family. Glutamate--tRNA ligase type 1 subfamily. As to quaternary structure, monomer.

It is found in the cytoplasm. It catalyses the reaction tRNA(Glu) + L-glutamate + ATP = L-glutamyl-tRNA(Glu) + AMP + diphosphate. Its function is as follows. Catalyzes the attachment of glutamate to tRNA(Glu) in a two-step reaction: glutamate is first activated by ATP to form Glu-AMP and then transferred to the acceptor end of tRNA(Glu). This chain is Glutamate--tRNA ligase, found in Azoarcus sp. (strain BH72).